We begin with the raw amino-acid sequence, 262 residues long: Granzyme A (262 aa).

The first 26 residues, 1–26, serve as a signal peptide directing secretion; sequence MRNSYRFLASSLSVVVSLLLIPEDVC. A propeptide spans 27–28 (activation peptide); the sequence is EK. Residues 29–259 form the Peptidase S1 domain; that stretch reads IIGGNEVTPH…HLNWIIMTIK (231 aa). A disulfide bridge links cysteine 54 with cysteine 70. Residues histidine 69 and aspartate 114 each act as charge relay system in the active site. Disulfide bonds link cysteine 148-cysteine 218, cysteine 179-cysteine 197, and cysteine 208-cysteine 234. An N-linked (GlcNAc...) asparagine glycan is attached at asparagine 170. Serine 212 (charge relay system) is an active-site residue.

Belongs to the peptidase S1 family. Granzyme subfamily. As to quaternary structure, homodimer; disulfide-linked. Interacts with APEX1.

The protein resides in the secreted. Its subcellular location is the cytoplasmic granule. It carries out the reaction Hydrolysis of proteins, including fibronectin, type IV collagen and nucleolin. Preferential cleavage: -Arg-|-Xaa-, -Lys-|-Xaa- &gt;&gt; -Phe-|-Xaa- in small molecule substrates.. Abundant protease in the cytosolic granules of cytotoxic T-cells and NK-cells which activates caspase-independent pyroptosis when delivered into the target cell through the immunological synapse. It cleaves after Lys or Arg. Once delivered into the target cell, acts by catalyzing cleavage of gasdermin-B (GSDMB), releasing the pore-forming moiety of GSDMB, thereby triggering pyroptosis and target cell death. Cleaves APEX1 after 'Lys-31' and destroys its oxidative repair activity. Cleaves the nucleosome assembly protein SET after 'Lys-189', which disrupts its nucleosome assembly activity and allows the SET complex to translocate into the nucleus to nick and degrade the DNA. The polypeptide is Granzyme A (Homo sapiens (Human)).